The following is a 177-amino-acid chain: Transcriptional regulator MET31 (177 aa).

The C2H2-type zinc-finger motif lies at 95-117; sequence YSCAKCQLKFSRSSDLRRHEKVH.

As to quaternary structure, interacts with MET4 and MET28.

It is found in the cytoplasm. It localises to the nucleus. Its function is as follows. Auxiliary transcriptional regulator of sulfur amino acid metabolism. Involved in the transcriptional activation of MET28. The polypeptide is Transcriptional regulator MET31 (MET31) (Saccharomyces cerevisiae (strain ATCC 204508 / S288c) (Baker's yeast)).